The sequence spans 321 residues: Ribose-phosphate pyrophosphokinase (321 aa).

Residues 44-46 and 103-104 each bind ATP; these read DGE and RQ. Positions 137 and 179 each coordinate Mg(2+). Residue K202 is part of the active site. D-ribose 5-phosphate-binding positions include R204, D228, and 232–236; that span reads DTAGT.

The protein belongs to the ribose-phosphate pyrophosphokinase family. Class I subfamily. In terms of assembly, homohexamer. Requires Mg(2+) as cofactor.

It localises to the cytoplasm. The catalysed reaction is D-ribose 5-phosphate + ATP = 5-phospho-alpha-D-ribose 1-diphosphate + AMP + H(+). It functions in the pathway metabolic intermediate biosynthesis; 5-phospho-alpha-D-ribose 1-diphosphate biosynthesis; 5-phospho-alpha-D-ribose 1-diphosphate from D-ribose 5-phosphate (route I): step 1/1. Functionally, involved in the biosynthesis of the central metabolite phospho-alpha-D-ribosyl-1-pyrophosphate (PRPP) via the transfer of pyrophosphoryl group from ATP to 1-hydroxyl of ribose-5-phosphate (Rib-5-P). In Staphylococcus aureus (strain Mu50 / ATCC 700699), this protein is Ribose-phosphate pyrophosphokinase.